Reading from the N-terminus, the 279-residue chain is Urease accessory protein UreD (279 aa).

This sequence belongs to the UreD family. UreD, UreF and UreG form a complex that acts as a GTP-hydrolysis-dependent molecular chaperone, activating the urease apoprotein by helping to assemble the nickel containing metallocenter of UreC. The UreE protein probably delivers the nickel.

It localises to the cytoplasm. In terms of biological role, required for maturation of urease via the functional incorporation of the urease nickel metallocenter. In Brucella suis (strain ATCC 23445 / NCTC 10510), this protein is Urease accessory protein UreD.